A 272-amino-acid polypeptide reads, in one-letter code: Phosphatidylglycerol--prolipoprotein diacylglyceryl transferase (272 aa).

A run of 7 helical transmembrane segments spans residues 17-37 (LQVHWYGLMYLLAFLCAWGLA), 55-75 (LVFYGALGVVLGGRIGYVLFY), 90-110 (VWTGGMSFHGGFLGVMIAMLF), 125-145 (FIAPCVPTGLMLGRIGNFIGG), 174-194 (PSQIYQALCEGLLLFIILWWF), 202-222 (MAVSALFLMGYGVARFVMEFF), and 230-250 (GFILFGWMTKGQILTVPMLLI). An a 1,2-diacyl-sn-glycero-3-phospho-(1'-sn-glycerol)-binding site is contributed by Arg-138.

The protein belongs to the Lgt family.

It is found in the cell inner membrane. The enzyme catalyses L-cysteinyl-[prolipoprotein] + a 1,2-diacyl-sn-glycero-3-phospho-(1'-sn-glycerol) = an S-1,2-diacyl-sn-glyceryl-L-cysteinyl-[prolipoprotein] + sn-glycerol 1-phosphate + H(+). The protein operates within protein modification; lipoprotein biosynthesis (diacylglyceryl transfer). In terms of biological role, catalyzes the transfer of the diacylglyceryl group from phosphatidylglycerol to the sulfhydryl group of the N-terminal cysteine of a prolipoprotein, the first step in the formation of mature lipoproteins. This is Phosphatidylglycerol--prolipoprotein diacylglyceryl transferase from Acinetobacter baumannii (strain SDF).